The primary structure comprises 171 residues: ATP synthase subunit b (171 aa).

A helical transmembrane segment spans residues 19–39 (VGVGLILFIAIVIWAKAPAMI).

Belongs to the ATPase B chain family. As to quaternary structure, F-type ATPases have 2 components, F(1) - the catalytic core - and F(0) - the membrane proton channel. F(1) has five subunits: alpha(3), beta(3), gamma(1), delta(1), epsilon(1). F(0) has three main subunits: a(1), b(2) and c(10-14). The alpha and beta chains form an alternating ring which encloses part of the gamma chain. F(1) is attached to F(0) by a central stalk formed by the gamma and epsilon chains, while a peripheral stalk is formed by the delta and b chains.

The protein localises to the cell inner membrane. Its function is as follows. F(1)F(0) ATP synthase produces ATP from ADP in the presence of a proton or sodium gradient. F-type ATPases consist of two structural domains, F(1) containing the extramembraneous catalytic core and F(0) containing the membrane proton channel, linked together by a central stalk and a peripheral stalk. During catalysis, ATP synthesis in the catalytic domain of F(1) is coupled via a rotary mechanism of the central stalk subunits to proton translocation. In terms of biological role, component of the F(0) channel, it forms part of the peripheral stalk, linking F(1) to F(0). This is ATP synthase subunit b from Caulobacter sp. (strain K31).